We begin with the raw amino-acid sequence, 251 residues long: CDP-diacylglycerol pyrophosphatase (251 aa).

Residues 4-24 (AGLLFLVMIVIAVVAAGIGYW) form a helical membrane-spanning segment.

The protein belongs to the Cdh family.

The protein resides in the cell inner membrane. It catalyses the reaction a CDP-1,2-diacyl-sn-glycerol + H2O = a 1,2-diacyl-sn-glycero-3-phosphate + CMP + 2 H(+). It functions in the pathway phospholipid metabolism; CDP-diacylglycerol degradation; phosphatidate from CDP-diacylglycerol: step 1/1. The sequence is that of CDP-diacylglycerol pyrophosphatase from Escherichia coli O7:K1 (strain IAI39 / ExPEC).